A 1154-amino-acid polypeptide reads, in one-letter code: Polyketide biosynthesis protein ThaF (1154 aa).

The tract at residues 330 to 714 is acyl transferase; sequence MHAFLFPGQG…TNGIAPAARV (385 aa). Residues 627 to 689 are disordered; the sequence is SAVAASAPPR…PAPAPAPAPA (63 aa). The segment covering 641–672 has biased composition (low complexity); sequence ADAQPPAASPARAATAASTMPPASASASASAP. The segment covering 673 to 689 has biased composition (pro residues); that stretch reads APAPAPAPAPAPAPAPA.

The protein in the N-terminal section; belongs to the FabD family.

The protein localises to the cytoplasm. It catalyses the reaction holo-[ACP] + malonyl-CoA = malonyl-[ACP] + CoA. The protein operates within antibiotic biosynthesis. Involved in production of the polyketide antibiotic thailandamide. Probably has an acyl transferase activity and could also have a flavin mononucleotide-dependent oxidoreductase activity. The chain is Polyketide biosynthesis protein ThaF from Burkholderia thailandensis (strain ATCC 700388 / DSM 13276 / CCUG 48851 / CIP 106301 / E264).